Reading from the N-terminus, the 363-residue chain is 3-isopropylmalate dehydrogenase (363 aa).

77–90 (GPKWQHLPPDQQPE) contacts NAD(+). Residues arginine 98, arginine 108, arginine 137, and aspartate 226 each contribute to the substrate site. The Mg(2+) site is built by aspartate 226, aspartate 250, and aspartate 254. NAD(+) is bound at residue 284–296 (GSAPDIAGKNIAN).

Belongs to the isocitrate and isopropylmalate dehydrogenases family. LeuB type 1 subfamily. Homodimer. The cofactor is Mg(2+). It depends on Mn(2+) as a cofactor.

It localises to the cytoplasm. It carries out the reaction (2R,3S)-3-isopropylmalate + NAD(+) = 4-methyl-2-oxopentanoate + CO2 + NADH. The protein operates within amino-acid biosynthesis; L-leucine biosynthesis; L-leucine from 3-methyl-2-oxobutanoate: step 3/4. Catalyzes the oxidation of 3-carboxy-2-hydroxy-4-methylpentanoate (3-isopropylmalate) to 3-carboxy-4-methyl-2-oxopentanoate. The product decarboxylates to 4-methyl-2 oxopentanoate. The chain is 3-isopropylmalate dehydrogenase from Buchnera aphidicola subsp. Pemphigus spyrothecae.